Reading from the N-terminus, the 426-residue chain is Putative zinc protease AlbF (426 aa).

His66 contacts Zn(2+). Residue Glu69 is the Proton acceptor of the active site. The Zn(2+) site is built by His70 and Glu142.

This sequence belongs to the peptidase M16 family. Requires Zn(2+) as cofactor.

Its function is as follows. Required for production of the bacteriocin subtilosin. Could catalyze some step in the processing of presubtilosin. This is Putative zinc protease AlbF (albF) from Bacillus subtilis (strain 168).